Here is a 158-residue protein sequence, read N- to C-terminus: Inorganic pyrophosphatase (158 aa).

Residue Glu-8 coordinates Mg(2+). Residues Lys-16, Arg-30, and Tyr-42 each coordinate substrate. Asp-52, Asp-57, Asp-84, and Asp-89 together coordinate Mg(2+). Asp-89 acts as the Proton acceptor in catalysis. Tyr-125 provides a ligand contact to substrate.

Belongs to the PPase family. Homohexamer. The cofactor is Mg(2+).

The protein resides in the cytoplasm. The enzyme catalyses diphosphate + H2O = 2 phosphate + H(+). Catalyzes the hydrolysis of inorganic pyrophosphate (PPi) forming two phosphate ions. In Corynebacterium efficiens (strain DSM 44549 / YS-314 / AJ 12310 / JCM 11189 / NBRC 100395), this protein is Inorganic pyrophosphatase.